A 280-amino-acid chain; its full sequence is Diaminopimelate epimerase (280 aa).

Asn11 and Asn62 together coordinate substrate. Catalysis depends on Cys71, which acts as the Proton donor. Substrate is bound by residues 72-73 (GN), Asn160, Asn193, and 211-212 (ER). Cys220 functions as the Proton acceptor in the catalytic mechanism. 221–222 (GT) serves as a coordination point for substrate.

This sequence belongs to the diaminopimelate epimerase family. As to quaternary structure, homodimer.

It localises to the cytoplasm. It catalyses the reaction (2S,6S)-2,6-diaminopimelate = meso-2,6-diaminopimelate. It participates in amino-acid biosynthesis; L-lysine biosynthesis via DAP pathway; DL-2,6-diaminopimelate from LL-2,6-diaminopimelate: step 1/1. Functionally, catalyzes the stereoinversion of LL-2,6-diaminopimelate (L,L-DAP) to meso-diaminopimelate (meso-DAP), a precursor of L-lysine and an essential component of the bacterial peptidoglycan. The sequence is that of Diaminopimelate epimerase from Acetivibrio thermocellus (strain ATCC 27405 / DSM 1237 / JCM 9322 / NBRC 103400 / NCIMB 10682 / NRRL B-4536 / VPI 7372) (Clostridium thermocellum).